Consider the following 332-residue polypeptide: Biotin synthase (332 aa).

One can recognise a Radical SAM core domain in the interval 51–278 (RTIQLSTLMS…KSYVRLSAGR (228 aa)). 3 residues coordinate [4Fe-4S] cluster: Cys66, Cys70, and Cys73. Residues Cys110, Cys141, Cys201, and Arg273 each contribute to the [2Fe-2S] cluster site.

It belongs to the radical SAM superfamily. Biotin synthase family. Homodimer. [4Fe-4S] cluster serves as cofactor. Requires [2Fe-2S] cluster as cofactor.

The enzyme catalyses (4R,5S)-dethiobiotin + (sulfur carrier)-SH + 2 reduced [2Fe-2S]-[ferredoxin] + 2 S-adenosyl-L-methionine = (sulfur carrier)-H + biotin + 2 5'-deoxyadenosine + 2 L-methionine + 2 oxidized [2Fe-2S]-[ferredoxin]. It participates in cofactor biosynthesis; biotin biosynthesis; biotin from 7,8-diaminononanoate: step 2/2. Catalyzes the conversion of dethiobiotin (DTB) to biotin by the insertion of a sulfur atom into dethiobiotin via a radical-based mechanism. The chain is Biotin synthase from Haemophilus influenzae (strain PittGG).